The chain runs to 132 residues: Small ribosomal subunit protein uS8 (132 aa).

It belongs to the universal ribosomal protein uS8 family. As to quaternary structure, part of the 30S ribosomal subunit. Contacts proteins S5 and S12.

Its function is as follows. One of the primary rRNA binding proteins, it binds directly to 16S rRNA central domain where it helps coordinate assembly of the platform of the 30S subunit. The chain is Small ribosomal subunit protein uS8 from Streptococcus pyogenes serotype M1.